Reading from the N-terminus, the 531-residue chain is 2-isopropylmalate synthase (531 aa).

Positions 8 to 284 constitute a Pyruvate carboxyltransferase domain; sequence IIIFDTTLRD…LTNIDTKQIY (277 aa). Aspartate 17, histidine 208, histidine 210, and asparagine 244 together coordinate Mn(2+). Residues 408–531 are regulatory domain; sequence RVELVQVSCG…TQDKQTEVTA (124 aa).

This sequence belongs to the alpha-IPM synthase/homocitrate synthase family. LeuA type 1 subfamily. In terms of assembly, homodimer. Mn(2+) is required as a cofactor.

The protein localises to the cytoplasm. The catalysed reaction is 3-methyl-2-oxobutanoate + acetyl-CoA + H2O = (2S)-2-isopropylmalate + CoA + H(+). Its pathway is amino-acid biosynthesis; L-leucine biosynthesis; L-leucine from 3-methyl-2-oxobutanoate: step 1/4. Functionally, catalyzes the condensation of the acetyl group of acetyl-CoA with 3-methyl-2-oxobutanoate (2-ketoisovalerate) to form 3-carboxy-3-hydroxy-4-methylpentanoate (2-isopropylmalate). The chain is 2-isopropylmalate synthase from Trichormus variabilis (strain ATCC 29413 / PCC 7937) (Anabaena variabilis).